Reading from the N-terminus, the 483-residue chain is MCCKAIKLGNARVFPVTTFRDAKKVRWINLLKSGKAKRNKSGKIIKQGEFQSKDVQDARIQPYRRWFSNTRVISQDVLNMFRESFAEKLNDPCKVLLKQNKLPMSLLMEPTKTRKANIIDIEPFDDTFGKKSXRKRAKLYASSIENLSNFAFESYENYIKKNSEYENVDKNIQKSFEAIFSKGTSKRIWNELYKXIDSSDVIIQLLDARNPLGTRCKHVEEYLKKEKPHKHMILLLNKCDLIPTWCTREWIKQLSKEYPTLAFHASINNPFGKGSLIQLLRQFSKLHSNRRQISVGFIGYPNTGKSSVINTLRSKKVCNTAPIPGETKVWQYVRMTSKIFMIDCPGIVPPNSNDSETEIIIKGALRIEKVSNPEQYIHAILNLCETKHLERTYQISGWENDSTKFIELLARKTGKLLKGGEVDESSIAKMVINDFIRGKIPWFIAPAQENDPSNIKLSNNTLVEKNHLTTLDDEIYNDANPNA.

One can recognise a CP-type G domain in the interval 189 to 350 (WNELYKXIDS…MIDCPGIVPP (162 aa)). Residues 299 to 306 (GYPNTGKS) and 343 to 347 (DCPGI) each bind GTP.

It belongs to the TRAFAC class YlqF/YawG GTPase family. NOG2 subfamily.

The protein localises to the nucleus. It is found in the nucleolus. In terms of biological role, GTPase that associates with pre-60S ribosomal subunits in the nucleolus and is required for their nuclear export and maturation. This is Nucleolar GTP-binding protein 2 (NOG2) from Pneumocystis carinii.